The chain runs to 173 residues: Translation initiation factor IF-3 (173 aa).

This sequence belongs to the IF-3 family. In terms of assembly, monomer.

It localises to the cytoplasm. IF-3 binds to the 30S ribosomal subunit and shifts the equilibrium between 70S ribosomes and their 50S and 30S subunits in favor of the free subunits, thus enhancing the availability of 30S subunits on which protein synthesis initiation begins. This Bartonella bacilliformis (strain ATCC 35685 / KC583 / Herrer 020/F12,63) protein is Translation initiation factor IF-3.